Consider the following 186-residue polypeptide: Ribosome-recycling factor (186 aa).

The protein belongs to the RRF family.

The protein localises to the cytoplasm. In terms of biological role, responsible for the release of ribosomes from messenger RNA at the termination of protein biosynthesis. May increase the efficiency of translation by recycling ribosomes from one round of translation to another. This chain is Ribosome-recycling factor, found in Rickettsia peacockii (strain Rustic).